A 243-amino-acid polypeptide reads, in one-letter code: ATP synthase subunit b, mitochondrial (243 aa).

It belongs to the eukaryotic ATPase B chain family. F-type ATPases have 2 components, CF(1) - the catalytic core - and CF(0) - the membrane proton channel. CF(1) has five subunits: alpha(3), beta(3), gamma(1), delta(1), epsilon(1). CF(0) has three main subunits: a, b and c.

It localises to the mitochondrion. The protein resides in the mitochondrion inner membrane. Its function is as follows. Mitochondrial membrane ATP synthase (F(1)F(0) ATP synthase or Complex V) produces ATP from ADP in the presence of a proton gradient across the membrane which is generated by electron transport complexes of the respiratory chain. F-type ATPases consist of two structural domains, F(1) - containing the extramembraneous catalytic core, and F(0) - containing the membrane proton channel, linked together by a central stalk and a peripheral stalk. During catalysis, ATP synthesis in the catalytic domain of F(1) is coupled via a rotary mechanism of the central stalk subunits to proton translocation. Part of the complex F(0) domain and the peripheric stalk, which acts as a stator to hold the catalytic alpha(3)beta(3) subcomplex and subunit a/ATP6 static relative to the rotary elements. This is ATP synthase subunit b, mitochondrial from Drosophila melanogaster (Fruit fly).